We begin with the raw amino-acid sequence, 315 residues long: Methionyl-tRNA formyltransferase (315 aa).

Residue 113 to 116 (SLLP) coordinates (6S)-5,6,7,8-tetrahydrofolate.

This sequence belongs to the Fmt family.

It carries out the reaction L-methionyl-tRNA(fMet) + (6R)-10-formyltetrahydrofolate = N-formyl-L-methionyl-tRNA(fMet) + (6S)-5,6,7,8-tetrahydrofolate + H(+). In terms of biological role, attaches a formyl group to the free amino group of methionyl-tRNA(fMet). The formyl group appears to play a dual role in the initiator identity of N-formylmethionyl-tRNA by promoting its recognition by IF2 and preventing the misappropriation of this tRNA by the elongation apparatus. This chain is Methionyl-tRNA formyltransferase, found in Escherichia fergusonii (strain ATCC 35469 / DSM 13698 / CCUG 18766 / IAM 14443 / JCM 21226 / LMG 7866 / NBRC 102419 / NCTC 12128 / CDC 0568-73).